The chain runs to 246 residues: tRNA (guanine-N(1)-)-methyltransferase (246 aa).

Residues G113 and 132–137 (LGDFVV) contribute to the S-adenosyl-L-methionine site.

Belongs to the RNA methyltransferase TrmD family. In terms of assembly, homodimer.

It localises to the cytoplasm. It catalyses the reaction guanosine(37) in tRNA + S-adenosyl-L-methionine = N(1)-methylguanosine(37) in tRNA + S-adenosyl-L-homocysteine + H(+). Its function is as follows. Specifically methylates guanosine-37 in various tRNAs. This is tRNA (guanine-N(1)-)-methyltransferase from Latilactobacillus sakei subsp. sakei (strain 23K) (Lactobacillus sakei subsp. sakei).